The sequence spans 230 residues: uncharacterized protein (230 aa).

The helical transmembrane segment at 7–23 (LFTASILSLGYLVFICG) threads the bilayer. The segment at 27-230 (KPKPTASTES…VKTEGTLKKN (204 aa)) is disordered. Residues 50–59 (AVPQKPAAPA) show a composition bias toward low complexity. The span at 60–83 (AEEKAPVDPKDPKSKDVDEAKKPD) shows a compositional bias: basic and acidic residues. Over residues 101-112 (KKSKKSEKSKKK) the composition is skewed to basic residues. Basic and acidic residues predominate over residues 113–173 (KTEEKVMSED…KEKSKDETVP (61 aa)). Over residues 199–210 (ETDEFPTIDEDA) the composition is skewed to acidic residues. Over residues 211-230 (EKTKKTEKKDVKTEGTLKKN) the composition is skewed to basic and acidic residues.

It is found in the membrane. This is an uncharacterized protein from Caenorhabditis elegans.